The chain runs to 486 residues: NADH-quinone oxidoreductase subunit N (486 aa).

A run of 14 helical transmembrane segments spans residues 14–34 (SIAPMMVLSLFAVFILVLNFI), 45–65 (MLAILGLAINIFFLFGYSGIV), 77–97 (FAFISMIIILLFSILFLPLTL), 105–125 (CSLAEFYALYLFMIVGYEFMV), 130–150 (LIVILVGLETSSLALYTLIAL), 163–183 (YFTMGALSTGFFCFAIVIFYL), 203–223 (ILIATACIFLICSIGFKLSLI), 237–257 (SEVMAGYISIVPKIAGFIVAM), 268–288 (IAFIQISLYIIAVLTMTLANI), 299–319 (MLAFSSISHAGFVLCAVVIGT), 326–346 (LFLYWLMFSFANLGAFSVLWF), 377–397 (FLMALFMISLAGIPPFSVFWG), 409–429 (GFIFMAVIMAINSAIAVYYYL), and 459–479 (FIITFSAILCILAPFMVKFWT).

The protein belongs to the complex I subunit 2 family. In terms of assembly, NDH-1 is composed of 14 different subunits. Subunits NuoA, H, J, K, L, M, N constitute the membrane sector of the complex.

The protein resides in the cell inner membrane. The catalysed reaction is a quinone + NADH + 5 H(+)(in) = a quinol + NAD(+) + 4 H(+)(out). NDH-1 shuttles electrons from NADH, via FMN and iron-sulfur (Fe-S) centers, to quinones in the respiratory chain. The immediate electron acceptor for the enzyme in this species is believed to be ubiquinone. Couples the redox reaction to proton translocation (for every two electrons transferred, four hydrogen ions are translocated across the cytoplasmic membrane), and thus conserves the redox energy in a proton gradient. This is NADH-quinone oxidoreductase subunit N from Campylobacter hominis (strain ATCC BAA-381 / DSM 21671 / CCUG 45161 / LMG 19568 / NCTC 13146 / CH001A).